Reading from the N-terminus, the 463-residue chain is L-cystine uptake protein TcyP (463 aa).

10 consecutive transmembrane segments (helical) span residues 3-23 (TLLVVLHVFILFLLILGLFVM), 34-54 (VFTALGLGIVFGFALQLIYGP), 73-93 (YVKLLQMVVMPLVFISILGAF), 105-125 (ISGLIIGILVATTAVAAAVGI), 184-204 (PTSTIAVVIFAAFLGVAFLGV), 225-245 (IVMRVVTLILRLTPYGVLAIM), 262-282 (MFVIASYAALITMFIIHLLLL), 338-358 (LSIGQNGCAGIYPAMLAMMIA), 369-389 (VFIITVIAVVAISSFGVAGVG), and 394-414 (FAALLVLSSLNMPVALAGLLI).

This sequence belongs to the dicarboxylate/amino acid:cation symporter (DAACS) (TC 2.A.23) family.

It is found in the cell membrane. Functionally, mediates uptake of L-cystine, the oxidized form of L-cysteine. Although it is more specific for L-cystine, it could also transport a much broader range of amino acids and sulfur compounds including S-methylcysteine. The chain is L-cystine uptake protein TcyP (tcyP) from Bacillus subtilis (strain 168).